The following is a 353-amino-acid chain: Histidinol-phosphate aminotransferase (353 aa).

The residue at position 211 (Lys211) is an N6-(pyridoxal phosphate)lysine.

Belongs to the class-II pyridoxal-phosphate-dependent aminotransferase family. Histidinol-phosphate aminotransferase subfamily. Homodimer. Pyridoxal 5'-phosphate is required as a cofactor.

The catalysed reaction is L-histidinol phosphate + 2-oxoglutarate = 3-(imidazol-4-yl)-2-oxopropyl phosphate + L-glutamate. It participates in amino-acid biosynthesis; L-histidine biosynthesis; L-histidine from 5-phospho-alpha-D-ribose 1-diphosphate: step 7/9. The protein is Histidinol-phosphate aminotransferase of Klebsiella pneumoniae (strain 342).